Here is a 121-residue protein sequence, read N- to C-terminus: Basic phospholipase A2 homolog blK-PLA2 (121 aa).

7 disulfide bridges follow: cysteine 26–cysteine 115, cysteine 28–cysteine 44, cysteine 43–cysteine 95, cysteine 49–cysteine 121, cysteine 50–cysteine 88, cysteine 57–cysteine 81, and cysteine 75–cysteine 86. The important for membrane-damaging activities in eukaryotes and bacteria; heparin-binding stretch occupies residues 105–117; that stretch reads KKYRYHLKPFCKK.

The protein belongs to the phospholipase A2 family. Group II subfamily. K49 sub-subfamily. Homodimer; non-covalently linked. Expressed by the venom gland.

Its subcellular location is the secreted. In terms of biological role, snake venom phospholipase A2 (PLA2) homolog that lacks enzymatic activity. Shows myotoxic and edema-inducing activities in vivo. A model of myotoxic mechanism has been proposed: an apo Lys49-PLA2 is activated by the entrance of a hydrophobic molecule (e.g. fatty acid) at the hydrophobic channel of the protein leading to a reorientation of a monomer. This reorientation causes a transition between 'inactive' to 'active' states, causing alignment of C-terminal and membrane-docking sites (MDoS) side-by-side and putting the membrane-disruption sites (MDiS) in the same plane, exposed to solvent and in a symmetric position for both monomers. The MDoS region stabilizes the toxin on membrane by the interaction of charged residues with phospholipid head groups. Subsequently, the MDiS region destabilizes the membrane with penetration of hydrophobic residues. This insertion causes a disorganization of the membrane, allowing an uncontrolled influx of ions (i.e. calcium and sodium), and eventually triggering irreversible intracellular alterations and cell death. In Bothrops leucurus (Whitetail lancehead), this protein is Basic phospholipase A2 homolog blK-PLA2.